Here is a 186-residue protein sequence, read N- to C-terminus: Riboflavin kinase (186 aa).

Mg(2+) contacts are provided by Thr-42 and Asn-44. Catalysis depends on Glu-123, which acts as the Nucleophile.

This sequence belongs to the flavokinase family. Zn(2+) is required as a cofactor. The cofactor is Mg(2+).

It catalyses the reaction riboflavin + ATP = FMN + ADP + H(+). Its pathway is cofactor biosynthesis; FMN biosynthesis; FMN from riboflavin (ATP route): step 1/1. Its function is as follows. Catalyzes the phosphorylation of riboflavin (vitamin B2) to form flavin mononucleotide (FMN) coenzyme. This is Riboflavin kinase (FMN1) from Eremothecium gossypii (strain ATCC 10895 / CBS 109.51 / FGSC 9923 / NRRL Y-1056) (Yeast).